Consider the following 286-residue polypeptide: uncharacterized protein (286 aa).

This is an uncharacterized protein from Schizosaccharomyces pombe (strain 972 / ATCC 24843) (Fission yeast).